The chain runs to 431 residues: Serine--tRNA ligase (431 aa).

235 to 237 (TAE) is a binding site for L-serine. Residues 266–268 (RRE) and valine 282 contribute to the ATP site. Glutamate 289 contacts L-serine. 353-356 (EASS) is an ATP binding site. Serine 389 is an L-serine binding site.

It belongs to the class-II aminoacyl-tRNA synthetase family. Type-1 seryl-tRNA synthetase subfamily. In terms of assembly, homodimer. The tRNA molecule binds across the dimer.

The protein resides in the cytoplasm. It carries out the reaction tRNA(Ser) + L-serine + ATP = L-seryl-tRNA(Ser) + AMP + diphosphate + H(+). It catalyses the reaction tRNA(Sec) + L-serine + ATP = L-seryl-tRNA(Sec) + AMP + diphosphate + H(+). It functions in the pathway aminoacyl-tRNA biosynthesis; selenocysteinyl-tRNA(Sec) biosynthesis; L-seryl-tRNA(Sec) from L-serine and tRNA(Sec): step 1/1. Catalyzes the attachment of serine to tRNA(Ser). Is also able to aminoacylate tRNA(Sec) with serine, to form the misacylated tRNA L-seryl-tRNA(Sec), which will be further converted into selenocysteinyl-tRNA(Sec). The protein is Serine--tRNA ligase of Chlorobium phaeobacteroides (strain DSM 266 / SMG 266 / 2430).